A 314-amino-acid polypeptide reads, in one-letter code: L-lactate dehydrogenase 1 (314 aa).

NAD(+) is bound by residues V16, D37, K42, Y68, and G82–L83. Residues Q85, R91, and N123–D126 each bind substrate. Residues A121–N123 and S146 each bind NAD(+). Residue D151–R154 participates in substrate binding. Beta-D-fructose 1,6-bisphosphate is bound by residues R156 and H171. H178 functions as the Proton acceptor in the catalytic mechanism. Residue Y223 is modified to Phosphotyrosine. T232 lines the substrate pocket.

Belongs to the LDH/MDH superfamily. LDH family. In terms of assembly, homotetramer.

The protein localises to the cytoplasm. The catalysed reaction is (S)-lactate + NAD(+) = pyruvate + NADH + H(+). It functions in the pathway fermentation; pyruvate fermentation to lactate; (S)-lactate from pyruvate: step 1/1. Its activity is regulated as follows. Allosterically activated by fructose 1,6-bisphosphate (FBP). In terms of biological role, catalyzes the conversion of lactate to pyruvate. The chain is L-lactate dehydrogenase 1 from Bacillus cereus (strain ATCC 14579 / DSM 31 / CCUG 7414 / JCM 2152 / NBRC 15305 / NCIMB 9373 / NCTC 2599 / NRRL B-3711).